The chain runs to 104 residues: Large ribosomal subunit protein bL21 (104 aa).

Belongs to the bacterial ribosomal protein bL21 family. Part of the 50S ribosomal subunit. Contacts protein L20.

Its function is as follows. This protein binds to 23S rRNA in the presence of protein L20. In Elusimicrobium minutum (strain Pei191), this protein is Large ribosomal subunit protein bL21.